A 68-amino-acid chain; its full sequence is Large ribosomal subunit protein uL29 (68 aa).

The protein belongs to the universal ribosomal protein uL29 family.

The polypeptide is Large ribosomal subunit protein uL29 (Geobacillus sp. (strain WCH70)).